Here is a 305-residue protein sequence, read N- to C-terminus: Translation initiation factor eIF2B subunit alpha (305 aa).

An N6-acetyllysine modification is found at K35.

The protein belongs to the eIF-2B alpha/beta/delta subunits family. Component of the translation initiation factor 2B (eIF2B) complex which is a heterodecamer of two sets of five different subunits: alpha, beta, gamma, delta and epsilon. Subunits alpha, beta and delta comprise a regulatory subcomplex and subunits epsilon and gamma comprise a catalytic subcomplex. Within the complex, the hexameric regulatory complex resides at the center, with the two heterodimeric catalytic subcomplexes bound on opposite sides.

It localises to the cytoplasm. The protein resides in the cytosol. Its activity is regulated as follows. Activated by the chemical integrated stress response (ISR) inhibitor ISRIB which stimulates guanine nucleotide exchange factor activity for both phosphorylated and unphosphorylated eIF2. Its function is as follows. Acts as a component of the translation initiation factor 2B (eIF2B) complex, which catalyzes the exchange of GDP for GTP on eukaryotic initiation factor 2 (eIF2) gamma subunit. Its guanine nucleotide exchange factor activity is repressed when bound to eIF2 complex phosphorylated on the alpha subunit, thereby limiting the amount of methionyl-initiator methionine tRNA available to the ribosome and consequently global translation is repressed. This chain is Translation initiation factor eIF2B subunit alpha (EIF2B1), found in Pongo abelii (Sumatran orangutan).